We begin with the raw amino-acid sequence, 284 residues long: Bifunctional protein FolD (284 aa).

Residues 164–166 (GRS) and Ser-189 each bind NADP(+).

It belongs to the tetrahydrofolate dehydrogenase/cyclohydrolase family. Homodimer.

The catalysed reaction is (6R)-5,10-methylene-5,6,7,8-tetrahydrofolate + NADP(+) = (6R)-5,10-methenyltetrahydrofolate + NADPH. The enzyme catalyses (6R)-5,10-methenyltetrahydrofolate + H2O = (6R)-10-formyltetrahydrofolate + H(+). It participates in one-carbon metabolism; tetrahydrofolate interconversion. Catalyzes the oxidation of 5,10-methylenetetrahydrofolate to 5,10-methenyltetrahydrofolate and then the hydrolysis of 5,10-methenyltetrahydrofolate to 10-formyltetrahydrofolate. This chain is Bifunctional protein FolD, found in Listeria monocytogenes serotype 4a (strain HCC23).